A 201-amino-acid polypeptide reads, in one-letter code: LIM domain-containing protein PLIM2b (201 aa).

LIM zinc-binding domains follow at residues 8–68 (DKCT…LFKE) and 103–163 (DKCA…LFME). The disordered stretch occupies residues 171–201 (KKKSESQEVLPEVVPEEQPAPPPPDENREDN). Residues 177-187 (QEVLPEVVPEE) are compositionally biased toward low complexity.

As to quaternary structure, interacts with NEK3.

This is LIM domain-containing protein PLIM2b from Oryza sativa subsp. japonica (Rice).